Reading from the N-terminus, the 294-residue chain is Protoheme IX farnesyltransferase (294 aa).

9 helical membrane passes run 22–42 (VTQL…PDLP), 46–66 (IVIA…AINC), 89–109 (ITVP…MWVL), 116–136 (LTMW…TIIL), 143–163 (NIVI…AAVA), 170–190 (AWIL…ALAL), 211–231 (AFTQ…TMLP), 232–252 (FAVG…DVIF), and 272–292 (FTYS…DHYL).

It belongs to the UbiA prenyltransferase family. Protoheme IX farnesyltransferase subfamily.

Its subcellular location is the cell inner membrane. It catalyses the reaction heme b + (2E,6E)-farnesyl diphosphate + H2O = Fe(II)-heme o + diphosphate. It functions in the pathway porphyrin-containing compound metabolism; heme O biosynthesis; heme O from protoheme: step 1/1. In terms of biological role, converts heme B (protoheme IX) to heme O by substitution of the vinyl group on carbon 2 of heme B porphyrin ring with a hydroxyethyl farnesyl side group. The polypeptide is Protoheme IX farnesyltransferase (Herminiimonas arsenicoxydans).